Here is an 804-residue protein sequence, read N- to C-terminus: Endoplasmin (804 aa).

The N-terminal stretch at 1–21 (MRALWVLGLCCVLLTFGSVRA) is a signal peptide. The short motif at 42–44 (SRT) is the SRT pseudosubstrate motif element. Asn62 carries N-linked (GlcNAc...) asparagine glycosylation. Ser64 carries the post-translational modification Phosphoserine. An N-linked (GlcNAc...) asparagine glycan is attached at Asn107. Residues Asn107, Asp149, and Asn162 each contribute to the ATP site. An N6-(2-hydroxyisobutyryl)lysine modification is found at Lys168. The residue at position 172 (Ser172) is a Phosphoserine. Phe199 is an ATP binding site. Residue Asn217 is glycosylated (N-linked (GlcNAc...) asparagine). The segment at 288-323 (TVEEPMEEEEAAKEEKEESDDEAAVEEEEEEKKPKT) is disordered. Over residues 289-317 (VEEPMEEEEAAKEEKEESDDEAAVEEEEE) the composition is skewed to acidic residues. Ser306 and Ser403 each carry phosphoserine. An N6-succinyllysine modification is found at Lys404. An N-linked (GlcNAc...) asparagine glycan is attached at Asn445. A Phosphoserine modification is found at Ser447. Lys479 is subject to N6-acetyllysine. N-linked (GlcNAc...) asparagine glycans are attached at residues Asn481 and Asn502. Lys633 bears the N6-succinyllysine mark. Residues 750-804 (DPDAKVEEEPEEEPEETTEDTTEDTEQDEDEEMDVGTDEEEQETAKESTAEKDEL) are disordered. A compositionally biased stretch (acidic residues) spans 757-791 (EEPEEEPEETTEDTTEDTEQDEDEEMDVGTDEEEQ). Thr786 is subject to Phosphothreonine. A compositionally biased stretch (basic and acidic residues) spans 792–804 (ETAKESTAEKDEL). The Prevents secretion from ER motif lies at 801–804 (KDEL).

The protein belongs to the heat shock protein 90 family. In terms of assembly, homodimer; disulfide-linked. Component of an EIF2 complex at least composed of CELF1/CUGBP1, CALR, CALR3, EIF2S1, EIF2S2, HSP90B1 and HSPA5. Part of a large chaperone multiprotein complex comprising DNAJB11, HSP90B1, HSPA5, HYOU, PDIA2, PDIA4, PDIA6, PPIB, SDF2L1, UGGT1 and very small amounts of ERP29, but not, or at very low levels, CALR nor CANX. Interacts with AIMP1; regulates its retention in the endoplasmic reticulum. Hyperglycosylated form interacts with OS9; promoting its degradation by the endoplasmic reticulum associated degradation (ERAD). Interacts with CNPY3. This interaction is disrupted in the presence of ATP. Interacts with TLR4 and TLR9, but not with TLR3. Interacts with MZB1 in a calcium-dependent manner. Interacts with METTL23. Interacts with IL1B; the interaction facilitates cargo translocation into the ERGIC. Interacts with EIF2AK3. Phosphorylated by CK2. Post-translationally, N-glycosylated cotranslationally at Asn-217 by STT3A-containing OST-A complex: this glycosylation is constitutive. In response to various stress, 5 additional facultative sites (Asn-62, Asn-107, Asn-445, Asn-481 and Asn-502) can be glycosylated post-translationally by STT3B-containing OST-B complex, leading to a hyperglycosylated form that is degraded by the ER-associated degradation (ERAD) pathway. In normal conditions, the OST-A complex together with CCDC134 prevent glycosylation at facultative sites during protein folding, thereby preventing hyperglycosylation. Mechanistically, nascent HSP90B1 is tethered during translation to a specialized CCDC134-containing translocon that forms a microenvironment for its folding, in which STT3A associates with the SRT pseudosubstrate motif, and prevents access to facultative glycosylation sites until folding is completed, rendering its facultative sites inaccessible to the OST-B complex.

Its subcellular location is the endoplasmic reticulum lumen. The protein resides in the sarcoplasmic reticulum lumen. It is found in the melanosome. It carries out the reaction ATP + H2O = ADP + phosphate + H(+). In terms of biological role, ATP-dependent chaperone involved in the processing of proteins in the endoplasmic reticulum, regulating their transport. Together with MESD, acts as a modulator of the Wnt pathway by promoting the folding of LRP6, a coreceptor of the canonical Wnt pathway. When associated with CNPY3, required for proper folding of Toll-like receptors. Promotes folding and trafficking of TLR4 to the cell surface. May participate in the unfolding of cytosolic leaderless cargos (lacking the secretion signal sequence) such as the interleukin 1/IL-1 to facilitate their translocation into the ERGIC (endoplasmic reticulum-Golgi intermediate compartment) and secretion; the translocation process is mediated by the cargo receptor TMED10. The chain is Endoplasmin (HSP90B1) from Pongo abelii (Sumatran orangutan).